Consider the following 469-residue polypeptide: Cysteine protease ATG4 (469 aa).

The interval 48–99 is disordered; the sequence is KNIKADDHHPQTPPSVLKAETETQEAHDTAQPPNPPTNAPDTPPDSISSSFS. Basic and acidic residues predominate over residues 66-75; the sequence is AETETQEAHD. The segment covering 79–90 has biased composition (pro residues); it reads PPNPPTNAPDTP. Cys-172 serves as the catalytic Nucleophile. Residues Asp-362 and His-364 contribute to the active site. A disordered region spans residues 443-469; the sequence is GSSEGRESAIDEVETLSDDDTDTIHEA. Acidic residues predominate over residues 452 to 463; the sequence is IDEVETLSDDDT.

It belongs to the peptidase C54 family. In terms of assembly, interacts with ATG8.

Its subcellular location is the cytoplasm. It localises to the nucleus. The protein localises to the preautophagosomal structure. It carries out the reaction [protein]-C-terminal L-amino acid-glycyl-phosphatidylethanolamide + H2O = [protein]-C-terminal L-amino acid-glycine + a 1,2-diacyl-sn-glycero-3-phosphoethanolamine. Cysteine protease that plays a key role in cytoplasm to vacuole transport (Cvt) and autophagy by mediating both proteolytic activation and delipidation of ATG8. Required for selective autophagic degradation of the nucleus (nucleophagy) as well as for mitophagy which contributes to regulate mitochondrial quantity and quality by eliminating the mitochondria to a basal level to fulfill cellular energy requirements and preventing excess ROS production. The protease activity is required for proteolytic activation of ATG8: cleaves the C-terminal amino acid of ATG8 to reveal a C-terminal glycine. ATG8 ubiquitin-like activity requires the exposure of the glycine at the C-terminus for its conjugation to phosphatidylethanolamine (PE) and its insertion to membranes, which is necessary for autophagy. The ATG8-PE conjugate mediates tethering between adjacent membranes and stimulates membrane hemifusion, leading to expansion of the autophagosomal membrane during autophagy. In addition to the protease activity, also catalyzes deconjugation of PE-conjugated forms of ATG8 during macroautophagy: ATG8 delipidation is required to release the protein from membranes, which facilitates multiple events during macroautophagy, and especially for efficient autophagosome biogenesis, the assembly of ATG9-containing tubulovesicular clusters into phagophores/autophagosomes, and for the disassembly of PAS-associated ATG components. ATG8 delipidation by ATG4 also recycles ATG8-PE generated on inappropriate membranes to maintain a reservoir of unlipidated ATG8 that is required for autophagosome formation at the PAS. Autophagy is required for proper vegetative growth, asexual/sexual reproduction, and full virulence. Autophagy is particularly involved in the biosynthesis of deoxynivalenol (DON), an important virulence determinant. This is Cysteine protease ATG4 from Gibberella zeae (strain ATCC MYA-4620 / CBS 123657 / FGSC 9075 / NRRL 31084 / PH-1) (Wheat head blight fungus).